Consider the following 240-residue polypeptide: Methylthioribulose-1-phosphate dehydratase (240 aa).

Cysteine 103 is a binding site for substrate. Zn(2+)-binding residues include histidine 121 and histidine 123. The active-site Proton donor/acceptor is glutamate 144. Position 200 (histidine 200) interacts with Zn(2+).

This sequence belongs to the aldolase class II family. MtnB subfamily. The cofactor is Zn(2+).

The protein localises to the cytoplasm. It carries out the reaction 5-(methylsulfanyl)-D-ribulose 1-phosphate = 5-methylsulfanyl-2,3-dioxopentyl phosphate + H2O. Its pathway is amino-acid biosynthesis; L-methionine biosynthesis via salvage pathway; L-methionine from S-methyl-5-thio-alpha-D-ribose 1-phosphate: step 2/6. Functionally, catalyzes the dehydration of methylthioribulose-1-phosphate (MTRu-1-P) into 2,3-diketo-5-methylthiopentyl-1-phosphate (DK-MTP-1-P). This Komagataella phaffii (strain GS115 / ATCC 20864) (Yeast) protein is Methylthioribulose-1-phosphate dehydratase.